The sequence spans 377 residues: Apelin receptor (377 aa).

Over 1–28 (MEDDGYNYYGADNQSECDYADWTPSGAL) the chain is Extracellular. A glycan (N-linked (GlcNAc...) asparagine) is linked at N13. Disulfide bonds link C17–C279 and C100–C179. Residues 29 to 52 (IPAIYILVFLLGTTGNGLVLWTVF) traverse the membrane as a helical segment. Residues 53-62 (WSSREKRRSA) are Cytoplasmic-facing. The helical transmembrane segment at 63–84 (DIFIASLAVADLTFVVTLPLWA) threads the bilayer. At 85-97 (TYTYREFDWPFGT) the chain is on the extracellular side. The chain crosses the membrane as a helical span at residues 98–123 (FSCKLSSYLIFVNMYASVFCLTGLSF). Residues 124 to 144 (DRYLAIVRPVANARLRLRVSG) are Cytoplasmic-facing. The chain crosses the membrane as a helical span at residues 145 to 162 (AVATAVLWVLAALLAVPV). The Extracellular segment spans residues 163–196 (MVFRSTDIPENSTKTQCYMDYSMVATSNSEWAWE). N173 is a glycosylation site (N-linked (GlcNAc...) asparagine). Residues 197-221 (VGLGVSSTAVGFVVPFIIMLTCYFF) form a helical membrane-spanning segment. The Cytoplasmic portion of the chain corresponds to 222-244 (IAQTIAGHFRKERIEGLRKRRRL). Residues 245 to 268 (LSIIVVLVVTFALCWMPYHLVKTL) form a helical membrane-spanning segment. Residues 269–287 (YMLGNLLHWPCDFDSFLMN) lie on the Extracellular side of the membrane. The helical transmembrane segment at 288–310 (VFPYCTCISYVNSCLNPFLYAFF) threads the bilayer. Topologically, residues 311-377 (DPRFRRACTS…IPYSQETLVD (67 aa)) are cytoplasmic. Low complexity predominate over residues 335–349 (SSSAEKSASYSSGHS). The interval 335–377 (SSSAEKSASYSSGHSQGPGPNMCKGGEPMHEKSIPYSQETLVD) is disordered.

Belongs to the G-protein coupled receptor 1 family. Homodimer; dimerization inhibits APLNR-mediated G protein and beta-arrestin signaling pathways compared to monomeric APLNR. Widely expressed. Highest expression in the lung, lower in the heart, placenta, ovary, skeletal muscle, mammary gland, kidney and several structures in the brain as the hypothalamus (supraoptic and periventricular nuclei), pituitary, olfactory bulb and pineal gland.

The protein localises to the cell membrane. G protein-coupled receptor for peptide hormones apelin (APLN) and apelin receptor early endogenous ligand (APELA/ELA), that plays a role in the regulation of normal cardiovascular function and fluid homeostasis. When acting as apelin receptor, activates both G(i) protein pathway that inhibits adenylate cyclase activity, and the beta-arrestin pathway that promotes internalization of the receptor. APLNR/APJ also functions as mechanoreceptor that is activated by pathological stimuli in a G-protein-independent fashion to induce beta-arrestin signaling, hence eliciting cardiac hypertrophy. However, the presence of apelin ligand blunts cardiac hypertrophic induction from APLNR/APJ on response to pathological stimuli. Plays a key role in early development such as gastrulation, blood vessels formation and heart morphogenesis by acting as a APELA receptor. May promote angioblast migration toward the embryonic midline, i.e. the position of the future vessel formation, during vasculogenesis. Promotes sinus venosus (SV)-derived endothelial cells migration into the developing heart to promote coronary blood vessel development. Also plays a role in various processes in adults such as regulation of blood vessel formation, blood pressure, heart contractility and heart failure. The polypeptide is Apelin receptor (Rattus norvegicus (Rat)).